Here is a 150-residue protein sequence, read N- to C-terminus: Natriuretic peptides A (150 aa).

A signal peptide spans 1-24 (MSSFTITVSFLLVLVFQFPGQTRA). 2 propeptides span residues 25–122 (NPVY…AAPR) and 92–102 (DGGALGRGPWD). The interval 77–100 (LEVPPWTGEVNPAQRDGGALGRGP) is disordered. A Phosphoserine modification is found at Ser-128. A disulfide bond links Cys-129 and Cys-145.

This sequence belongs to the natriuretic peptide family. Homodimer; disulfide-linked antiparallel dimer. In terms of processing, the precursor molecule is proteolytically cleaved by CORIN at Arg-122 to produce the atrial natriuretic peptide. Undergoes further proteolytic cleavage by unknown proteases to give rise to long-acting natriuretic peptide, vessel dilator and kaliuretic peptide. Additional processing gives rise to the auriculin and atriopeptin peptides. In the kidneys, alternative processing by an unknown protease results in the peptide urodilatin. Post-translationally, cleavage by MME initiates degradation of the factor and thereby regulates its activity. Degradation by IDE results in reduced activation of NPR1 (in vitro). During IDE degradation, the resulting products can temporarily stimulate NPR2 to produce cGMP, before the fragments are completely degraded and inactivated by IDE (in vitro). Degraded by IDE. In terms of processing, phosphorylation on Ser-128 decreases vasorelaxant activity. Brain (at protein level).

It is found in the secreted. The protein resides in the perikaryon. The protein localises to the cell projection. Functionally, hormone that plays a key role in mediating cardio-renal homeostasis, and is involved in vascular remodeling and regulating energy metabolism. Acts by specifically binding and stimulating NPR1 to produce cGMP, which in turn activates effector proteins, such as PRKG1, that drive various biological responses. Regulates vasodilation, natriuresis, diuresis and aldosterone synthesis and is therefore essential for regulating blood pressure, controlling the extracellular fluid volume and maintaining the fluid-electrolyte balance. Also involved in inhibiting cardiac remodeling and cardiac hypertrophy by inducing cardiomyocyte apoptosis and attenuating the growth of cardiomyocytes and fibroblasts. Plays a role in female pregnancy by promoting trophoblast invasion and spiral artery remodeling in uterus, and thus prevents pregnancy-induced hypertension. In adipose tissue, acts in various cGMP- and PKG-dependent pathways to regulate lipid metabolism and energy homeostasis. This includes up-regulating lipid metabolism and mitochondrial oxygen utilization by activating the AMP-activated protein kinase (AMPK), and increasing energy expenditure by acting via MAPK11 to promote the UCP1-dependent thermogenesis of brown adipose tissue. Binds the clearance receptor NPR3 which removes the hormone from circulation. In terms of biological role, may have a role in cardio-renal homeostasis through regulation of natriuresis, diuresis, vasodilation, and inhibiting aldosterone synthesis. In vitro, promotes the production of cGMP and induces vasodilation. May promote natriuresis, at least in part, by enhancing prostaglandin E2 synthesis resulting in the inhibition of renal Na+-K+-ATPase. However reports on the involvement of this peptide in mammal blood volume and blood pressure homeostasis are conflicting; according to a report, in vivo it is not sufficient to activate cGMP and does not inhibit collecting duct transport nor effect diuresis and natriuresis. Appears to bind to specific receptors that are distinct from the receptors bound by atrial natriuretic peptide and vessel dilator. Possibly enhances protein excretion in urine by decreasing proximal tubular protein reabsorption. Its function is as follows. May have a role in cardio-renal homeostasis through regulation of natriuresis, diuresis, and vasodilation. In vitro, promotes the production of cGMP and induces vasodilation. May promote natriuresis, at least in part, by enhancing prostaglandin E2 synthesis resulting in the inhibition of renal Na+-K+-ATPase. However reports on the involvement of this peptide in mammal blood volume and blood pressure homeostasis are conflicting; according to a report it is not sufficient to activate cGMP and does not inhibit collecting duct transport nor effect diuresis and natriuresis. Appears to bind to specific receptors that are distinct from the receptors bound by the atrial natriuretic and long-acting natriuretic peptides. Possibly functions in protein excretion in urine by maintaining the integrity of the proximal tubules and enhancing protein excretion by decreasing proximal tubular protein reabsorption. May have a role in cardio-renal homeostasis through regulation of diuresis and inhibiting aldosterone synthesis. In vitro, promotes the production of cGMP and induces vasodilation. May promote natriuresis, at least in part, by enhancing prostaglandin E2 synthesis resulting in the inhibition of renal Na+-K+-ATPase. May have a role in potassium excretion but not sodium excretion (natriuresis). Possibly enhances protein excretion in urine by decreasing proximal tubular protein reabsorption. Functionally, hormone produced in the kidneys that appears to be important for maintaining cardio-renal homeostasis. Mediates vasodilation, natriuresis and diuresis primarily in the renal system, in order to maintain the extracellular fluid volume and control the fluid-electrolyte balance. Specifically binds and stimulates cGMP production by renal transmembrane receptors, likely NPR1. Urodilatin not ANP, may be the natriuretic peptide responsible for the regulation of sodium and water homeostasis in the kidney. In terms of biological role, may have a role in cardio-renal homeostasis through regulation of natriuresis and vasodilation. In vivo promotes natriuresis and in vitro, vasodilates renal artery strips. Its function is as follows. May have a role in cardio-renal homeostasis through regulation of regulation of natriuresis and vasodilation. In vivo promotes natriuresis. In vitro, vasodilates intestinal smooth muscle but not smooth muscle strips. May have a role in cardio-renal homeostasis through regulation of natriuresis and vasodilation. In vivo promotes natriuresis. In vitro, selectively vasodilates intestinal and vascular smooth muscle strips. Functionally, may have a role in cardio-renal homeostasis through regulation of natriuresis and vasodilation. In vivo promotes natriuresis. In vitro, selectively vasodilates intestinal smooth muscle but not vascular smooth muscle strips. The chain is Natriuretic peptides A (NPPA) from Sus scrofa (Pig).